A 155-amino-acid chain; its full sequence is Cyanate hydratase (155 aa).

Residues arginine 95, glutamate 98, and serine 121 contribute to the active site.

It belongs to the cyanase family.

The enzyme catalyses cyanate + hydrogencarbonate + 3 H(+) = NH4(+) + 2 CO2. Functionally, catalyzes the reaction of cyanate with bicarbonate to produce ammonia and carbon dioxide. The sequence is that of Cyanate hydratase from Pseudomonas syringae pv. syringae (strain B728a).